Here is a 306-residue protein sequence, read N- to C-terminus: Aspartate carbamoyltransferase catalytic subunit (306 aa).

Carbamoyl phosphate-binding residues include Arg56 and Thr57. Lys84 is a binding site for L-aspartate. Residues Arg106, His134, and Gln137 each contribute to the carbamoyl phosphate site. L-aspartate is bound by residues Arg167 and Arg221. The carbamoyl phosphate site is built by Gly262 and Pro263.

This sequence belongs to the aspartate/ornithine carbamoyltransferase superfamily. ATCase family. As to quaternary structure, heterododecamer (2C3:3R2) of six catalytic PyrB chains organized as two trimers (C3), and six regulatory PyrI chains organized as three dimers (R2).

The enzyme catalyses carbamoyl phosphate + L-aspartate = N-carbamoyl-L-aspartate + phosphate + H(+). Its pathway is pyrimidine metabolism; UMP biosynthesis via de novo pathway; (S)-dihydroorotate from bicarbonate: step 2/3. In terms of biological role, catalyzes the condensation of carbamoyl phosphate and aspartate to form carbamoyl aspartate and inorganic phosphate, the committed step in the de novo pyrimidine nucleotide biosynthesis pathway. This chain is Aspartate carbamoyltransferase catalytic subunit, found in Desulforudis audaxviator (strain MP104C).